Here is a 213-residue protein sequence, read N- to C-terminus: Thymidine kinase (213 aa).

Residues 20–27 (GPMFSGKT) and 93–96 (DEAQ) contribute to the ATP site. Glutamate 94 acts as the Proton acceptor in catalysis. Positions 150, 153, 185, and 188 each coordinate Zn(2+).

The protein belongs to the thymidine kinase family. Homotetramer.

The protein localises to the cytoplasm. The catalysed reaction is thymidine + ATP = dTMP + ADP + H(+). The polypeptide is Thymidine kinase (Mycoplasma genitalium (strain ATCC 33530 / DSM 19775 / NCTC 10195 / G37) (Mycoplasmoides genitalium)).